Consider the following 170-residue polypeptide: Shikimate kinase (170 aa).

15–20 (GAGKTT) contributes to the ATP binding site. Residue T19 coordinates Mg(2+). D37, R61, and G83 together coordinate substrate. R121 is an ATP binding site. Position 140 (R140) interacts with substrate.

Belongs to the shikimate kinase family. As to quaternary structure, monomer. It depends on Mg(2+) as a cofactor.

Its subcellular location is the cytoplasm. It catalyses the reaction shikimate + ATP = 3-phosphoshikimate + ADP + H(+). The protein operates within metabolic intermediate biosynthesis; chorismate biosynthesis; chorismate from D-erythrose 4-phosphate and phosphoenolpyruvate: step 5/7. Catalyzes the specific phosphorylation of the 3-hydroxyl group of shikimic acid using ATP as a cosubstrate. In Neisseria gonorrhoeae (strain ATCC 700825 / FA 1090), this protein is Shikimate kinase.